Here is a 667-residue protein sequence, read N- to C-terminus: Acyl-coenzyme A oxidase acox-3 (667 aa).

FAD is bound by residues 138–141, 146–147, glycine 178, arginine 313, 334–337, and glycine 410; these read FCLT, GS, and QQYR. Glutamate 433 functions as the Proton acceptor in the catalytic mechanism. Position 435 (glutamate 435) interacts with FAD. The Microbody targeting signal signature appears at 665 to 667; sequence SKL.

It belongs to the acyl-CoA oxidase family. Homodimer. FAD is required as a cofactor. Expressed in intestine.

The protein resides in the peroxisome. It catalyses the reaction IC-asc-C7-CoA + O2 = IC-asc-DeltaC7-CoA + H2O2. The enzyme catalyses IC-asc-C9-CoA + O2 = IC-asc-DeltaC9-CoA + H2O2. The catalysed reaction is asc-C13-CoA + O2 = asc-DeltaC13-CoA + H2O2. Its pathway is lipid metabolism; peroxisomal fatty acid beta-oxidation. In contrast to other acyl-coenzyme A oxidases which bind to and are activated by ATP, does not bind ATP. Its function is as follows. Involved in the first step of peroxisomal beta-oxidation by catalyzing the desaturation of fatty acid-derived side chains of ascaroside pheromones, which regulates development and behavior. Specifically, shortens indol-3-carbonyl(IC)-ascarosides with 7-carbon (IC-asc-C7) or 9-carbon (IC-asc-C9) side chains and contributes to the shortening of ascarosides with 13-carbon (asc-C13) and 15-carbon (asc-C15) side chains. In Caenorhabditis elegans, this protein is Acyl-coenzyme A oxidase acox-3.